A 540-amino-acid chain; its full sequence is Keratin, type II cytoskeletal 73 (540 aa).

The interval 1–131 is head; it reads MSRQFTYKSG…DPEIQKVCAQ (131 aa). Residues 132 to 167 form a coil 1A region; the sequence is EREQIKALNNKFASFIDKVRFLEQQNQVLGTKWELL. Residues 132–445 form the IF rod domain; that stretch reads EREQIKALNN…KLLEGEECRM (314 aa). The interval 168–186 is linker 1; sequence QQQDLDNCKNNLEPILEGY. The segment at 187–278 is coil 1B; it reads ISNLRKQLEM…CLYEGEIAQM (92 aa). The tract at residues 279–302 is linker 12; it reads QSHISDTSVILSMDNNRNLDLNSI. A coil 2 region spans residues 303-441; sequence IAEVRAQYED…ATYRKLLEGE (139 aa). The segment at 442–540 is tail; that stretch reads ECRMSGEYTN…LSSPTKKTPR (99 aa). The tract at residues 509-540 is disordered; the sequence is GEAKTRLGSTSEIKDLLGKTPALSSPTKKTPR. Polar residues predominate over residues 530-540; the sequence is ALSSPTKKTPR.

This sequence belongs to the intermediate filament family. As to quaternary structure, heterotetramer of two type I and two type II keratins.

Has a role in hair formation. Specific component of keratin intermediate filaments in the inner root sheath (IRS) of the hair follicle. In Bos taurus (Bovine), this protein is Keratin, type II cytoskeletal 73 (KRT73).